We begin with the raw amino-acid sequence, 273 residues long: Glucosamine-6-phosphate deaminase (273 aa).

The Proton acceptor; for enolization step role is filled by Asp72. Asp141 functions as the For ring-opening step in the catalytic mechanism. The active-site Proton acceptor; for ring-opening step is His143. Glu148 functions as the For ring-opening step in the catalytic mechanism.

This sequence belongs to the glucosamine/galactosamine-6-phosphate isomerase family. Homohexamer.

Its subcellular location is the cytoplasm. It carries out the reaction alpha-D-glucosamine 6-phosphate + H2O = beta-D-fructose 6-phosphate + NH4(+). The protein operates within nucleotide-sugar biosynthesis; UDP-N-acetyl-alpha-D-glucosamine biosynthesis; alpha-D-glucosamine 6-phosphate from D-fructose 6-phosphate: step 1/1. Functionally, catalyzes the reversible conversion of alpha-D-glucosamine 6-phosphate (GlcN-6P) into beta-D-fructose 6-phosphate (Fru-6P) and ammonium ion, a regulatory reaction step in de novo uridine diphosphate-N-acetyl-alpha-D-glucosamine (UDP-GlcNAc) biosynthesis via hexosamine pathway. The sequence is that of Glucosamine-6-phosphate deaminase (Gnpda1) from Anopheles gambiae (African malaria mosquito).